An 826-amino-acid polypeptide reads, in one-letter code: Ferric-pyoverdine M114 receptor PbuA (826 aa).

The first 44 residues, 1–44 (MSASRFMLRPLTRALLMHGATRTRLAGTGLGLALTLTAAPYVQA), serve as a signal peptide directing secretion. Residues 110–119 (DGNTVTVLGP) carry the TonB box motif. The region spanning 160-271 (SLKETPQSVT…TAGGVNFVRK (112 aa)) is the TBDR plug domain. Positions 276–826 (TAHTQLSLSA…NFVMSVKADF (551 aa)) constitute a TBDR beta-barrel domain. Residues 809–826 (GNFYGDPRNFVMSVKADF) carry the TonB C-terminal box motif.

Belongs to the TonB-dependent receptor family.

Its subcellular location is the cell outer membrane. Its function is as follows. Specific receptor for the siderophore ferric pyoverdine (pseudobactin) M114. The chain is Ferric-pyoverdine M114 receptor PbuA (pbuA) from Pseudomonas sp. (strain M114).